Consider the following 152-residue polypeptide: Small ribosomal subunit protein uS15 (152 aa).

A compositionally biased stretch (basic residues) spans 1–11 (MAKMHTKRKGK). Positions 1 to 23 (MAKMHTKRKGKSSSTRPIRTDPP) are disordered.

Belongs to the universal ribosomal protein uS15 family. In terms of assembly, part of the 30S ribosomal subunit.

The sequence is that of Small ribosomal subunit protein uS15 from Methanosarcina acetivorans (strain ATCC 35395 / DSM 2834 / JCM 12185 / C2A).